A 154-amino-acid chain; its full sequence is UPF0178 protein BAV3236 (154 aa).

It belongs to the UPF0178 family.

In Bordetella avium (strain 197N), this protein is UPF0178 protein BAV3236.